Reading from the N-terminus, the 111-residue chain is Ribonuclease P protein component (111 aa).

The protein belongs to the RnpA family. In terms of assembly, consists of a catalytic RNA component (M1 or rnpB) and a protein subunit.

It carries out the reaction Endonucleolytic cleavage of RNA, removing 5'-extranucleotides from tRNA precursor.. Functionally, RNaseP catalyzes the removal of the 5'-leader sequence from pre-tRNA to produce the mature 5'-terminus. It can also cleave other RNA substrates such as 4.5S RNA. The protein component plays an auxiliary but essential role in vivo by binding to the 5'-leader sequence and broadening the substrate specificity of the ribozyme. The chain is Ribonuclease P protein component from Streptococcus thermophilus (strain ATCC BAA-491 / LMD-9).